Here is an 895-residue protein sequence, read N- to C-terminus: Alanine--tRNA ligase (895 aa).

The Zn(2+) site is built by histidine 577, histidine 581, cysteine 680, and histidine 684.

The protein belongs to the class-II aminoacyl-tRNA synthetase family. Zn(2+) serves as cofactor.

The protein localises to the cytoplasm. It catalyses the reaction tRNA(Ala) + L-alanine + ATP = L-alanyl-tRNA(Ala) + AMP + diphosphate. Functionally, catalyzes the attachment of alanine to tRNA(Ala) in a two-step reaction: alanine is first activated by ATP to form Ala-AMP and then transferred to the acceptor end of tRNA(Ala). Also edits incorrectly charged Ser-tRNA(Ala) and Gly-tRNA(Ala) via its editing domain. This is Alanine--tRNA ligase from Kocuria rhizophila (strain ATCC 9341 / DSM 348 / NBRC 103217 / DC2201).